The sequence spans 96 residues: Glutamyl-tRNA(Gln) amidotransferase subunit C (96 aa).

Belongs to the GatC family. In terms of assembly, heterotrimer of A, B and C subunits.

The catalysed reaction is L-glutamyl-tRNA(Gln) + L-glutamine + ATP + H2O = L-glutaminyl-tRNA(Gln) + L-glutamate + ADP + phosphate + H(+). It catalyses the reaction L-aspartyl-tRNA(Asn) + L-glutamine + ATP + H2O = L-asparaginyl-tRNA(Asn) + L-glutamate + ADP + phosphate + 2 H(+). Its function is as follows. Allows the formation of correctly charged Asn-tRNA(Asn) or Gln-tRNA(Gln) through the transamidation of misacylated Asp-tRNA(Asn) or Glu-tRNA(Gln) in organisms which lack either or both of asparaginyl-tRNA or glutaminyl-tRNA synthetases. The reaction takes place in the presence of glutamine and ATP through an activated phospho-Asp-tRNA(Asn) or phospho-Glu-tRNA(Gln). The sequence is that of Glutamyl-tRNA(Gln) amidotransferase subunit C from Pseudomonas aeruginosa (strain ATCC 15692 / DSM 22644 / CIP 104116 / JCM 14847 / LMG 12228 / 1C / PRS 101 / PAO1).